A 255-amino-acid polypeptide reads, in one-letter code: Putative deoxyribonuclease tatdn3-B (255 aa).

Zn(2+)-binding residues include His11, His13, Glu106, His129, His152, and Asp199.

It belongs to the metallo-dependent hydrolases superfamily. TatD-type hydrolase family. It depends on Mn(2+) as a cofactor. The cofactor is Ca(2+). Requires Mg(2+) as cofactor. Zn(2+) is required as a cofactor.

The protein resides in the nucleus. With respect to regulation, the 3'-exonuclease activity is sensitive to the metal ion present in the active site, whereas the AP endodeoxyribonuclease activity is observed in a variety of divalent metal cofactors. 3'-exoxonuclease activity is suppressed in the presence of Ca(2+), Zn(2+) and Ni(2+). Exhibits 3'-exonuclease activities and apurinic/apyrimidinic (AP) endonuclease (in vitro). Show preferential AP endonuclease activity on double-stranded DNA substrates and 3'- exonuclease activity on single-stranded DNA. This is Putative deoxyribonuclease tatdn3-B (tatdn3-b) from Xenopus laevis (African clawed frog).